Here is a 377-residue protein sequence, read N- to C-terminus: Pseudouridylate synthase RPUSD4, mitochondrial (377 aa).

A disordered region spans residues 51–70 (LRAQKQQQKTKEPAPTNPVQ). The active site involves Asp153.

It belongs to the pseudouridine synthase RluA family. In terms of assembly, interacts with 16S mt-rRNA, mt-tRNA(Phe) and mt-tRNA(Met). Forms a regulatory protein-RNA complex, consisting of RCC1L, NGRN, RPUSD3, RPUSD4, TRUB2, FASTKD2 and 16S mt-rRNA.

The protein resides in the mitochondrion matrix. It is found in the nucleus. Its subcellular location is the cytoplasm. It carries out the reaction uridine in 5S rRNA = pseudouridine in 5S rRNA. The catalysed reaction is a uridine in tRNA = a pseudouridine in tRNA. It catalyses the reaction a uridine in mRNA = a pseudouridine in mRNA. Catalyzes uridine to pseudouridine isomerization (pseudouridylation) of different mitochondrial RNA substrates. Acts on position 1397 in 16S mitochondrial ribosomal RNA (16S mt-rRNA). This modification is required for the assembly of 16S mt-rRNA into a functional mitochondrial ribosome. As a component of a functional protein-RNA module, consisting of RCC1L, NGRN, RPUSD3, RPUSD4, TRUB2, FASTKD2 and 16S mt-rRNA, controls 16S mt-rRNA abundance and is required for intra-mitochondrial translation. Acts on position 39 in mitochondrial tRNA(Phe). Also catalyzes pseudouridylation of mRNAs in nucleus: acts as a regulator of pre-mRNA splicing by mediating pseudouridylation of pre-mRNAs at locations associated with alternatively spliced regions. Pseudouridylation of pre-mRNAs near splice sites directly regulates mRNA splicing and mRNA 3'-end processing. This Bos taurus (Bovine) protein is Pseudouridylate synthase RPUSD4, mitochondrial.